Consider the following 671-residue polypeptide: K(+)-insensitive pyrophosphate-energized proton pump (671 aa).

Helical transmembrane passes span 3–23, 57–77, 79–99, 128–148, and 156–176; these read SLIF…AFFA, TIAV…DDGL, IAIG…IGMS, AVTG…FYIL, and VGFG…GGIF. Lysine 178 serves as a coordination point for substrate. Mg(2+) is bound by residues aspartate 181, aspartate 185, asparagine 208, and aspartate 211. 6 helical membrane-spanning segments follow: residues 223 to 243, 249 to 269, 285 to 305, 310 to 330, 366 to 386, and 391 to 411; these read LFET…LIIG, ILYP…SVFF, GVGG…NSLM, LFYA…ITEY, LVPT…VGGA, and IGLY…GMIV. Residue aspartate 421 coordinates Mg(2+). A run of 4 helical transmembrane segments spans residues 452–472, 490–510, 558–578, and 580–600; these read AVTK…LFAD, VVLA…AVTM, MAMP…ILGP, and ALAG…LMMD. Ca(2+) is bound by residues aspartate 607, aspartate 633, and aspartate 637. Lysine 640 contributes to the substrate binding site. The chain crosses the membrane as a helical span at residues 646–666; it reads ALNALIKVVNMVAILFSSLII.

This sequence belongs to the H(+)-translocating pyrophosphatase (TC 3.A.10) family. K(+)-insensitive subfamily. In terms of assembly, homodimer. Mg(2+) is required as a cofactor.

The protein localises to the cell membrane. The catalysed reaction is diphosphate + H2O + H(+)(in) = 2 phosphate + 2 H(+)(out). In terms of biological role, proton pump that utilizes the energy of pyrophosphate hydrolysis as the driving force for proton movement across the membrane. Generates a proton motive force. In Methanosarcina acetivorans (strain ATCC 35395 / DSM 2834 / JCM 12185 / C2A), this protein is K(+)-insensitive pyrophosphate-energized proton pump.